Here is a 209-residue protein sequence, read N- to C-terminus: Glycerol-3-phosphate acyltransferase (209 aa).

Transmembrane regions (helical) follow at residues Ile-5 to Gly-25, Leu-50 to Ala-70, Tyr-74 to Gly-94, Ile-115 to Leu-135, and Ala-151 to Leu-171.

It belongs to the PlsY family. Probably interacts with PlsX.

It localises to the cell membrane. The enzyme catalyses an acyl phosphate + sn-glycerol 3-phosphate = a 1-acyl-sn-glycero-3-phosphate + phosphate. Its pathway is lipid metabolism; phospholipid metabolism. In terms of biological role, catalyzes the transfer of an acyl group from acyl-phosphate (acyl-PO(4)) to glycerol-3-phosphate (G3P) to form lysophosphatidic acid (LPA). This enzyme utilizes acyl-phosphate as fatty acyl donor, but not acyl-CoA or acyl-ACP. This Limosilactobacillus reuteri (strain DSM 20016) (Lactobacillus reuteri) protein is Glycerol-3-phosphate acyltransferase.